A 168-amino-acid chain; its full sequence is Photosystem I assembly protein Ycf3 (168 aa).

3 TPR repeats span residues 35–68 (AFTY…EIDP), 72–105 (SYIL…NPFL), and 120–153 (GEQA…TPGN).

Belongs to the Ycf3 family.

Its subcellular location is the plastid. The protein resides in the chloroplast thylakoid membrane. Functionally, essential for the assembly of the photosystem I (PSI) complex. May act as a chaperone-like factor to guide the assembly of the PSI subunits. This is Photosystem I assembly protein Ycf3 from Solanum tuberosum (Potato).